The following is a 592-amino-acid chain: Aspartate--tRNA(Asp/Asn) ligase (592 aa).

Glu177 contributes to the L-aspartate binding site. Positions 201-204 are aspartate; sequence QIFK. L-aspartate contacts are provided by Arg223 and His452. ATP is bound at residue 223-225; sequence RDE. Glu486 is an ATP binding site. Arg493 contributes to the L-aspartate binding site. 538 to 541 is an ATP binding site; that stretch reads GIDR.

Belongs to the class-II aminoacyl-tRNA synthetase family. Type 1 subfamily. In terms of assembly, homodimer.

It is found in the cytoplasm. It carries out the reaction tRNA(Asx) + L-aspartate + ATP = L-aspartyl-tRNA(Asx) + AMP + diphosphate. Its function is as follows. Aspartyl-tRNA synthetase with relaxed tRNA specificity since it is able to aspartylate not only its cognate tRNA(Asp) but also tRNA(Asn). Reaction proceeds in two steps: L-aspartate is first activated by ATP to form Asp-AMP and then transferred to the acceptor end of tRNA(Asp/Asn). This Anaplasma marginale (strain Florida) protein is Aspartate--tRNA(Asp/Asn) ligase.